The primary structure comprises 280 residues: uncharacterized protein (280 aa).

NADP(+) is bound at residue 3–29 (KKIAIVTGASSGFGLLAAVKLARSFFV). Substrate is bound at residue Ser139. Residue Tyr152 is the Proton acceptor of the active site.

The protein belongs to the short-chain dehydrogenases/reductases (SDR) family.

This is an uncharacterized protein from Bacillus subtilis (strain 168).